The primary structure comprises 79 residues: Probable [Fe-S]-dependent transcriptional repressor (79 aa).

Residues Cys-56, Cys-61, Cys-64, and Cys-70 each contribute to the iron-sulfur cluster site.

The protein belongs to the FeoC family.

May function as a transcriptional regulator that controls feoABC expression. The chain is Probable [Fe-S]-dependent transcriptional repressor from Serratia proteamaculans (strain 568).